A 266-amino-acid polypeptide reads, in one-letter code: Undecaprenyl-diphosphatase (266 aa).

8 consecutive transmembrane segments (helical) span residues M1 to I21, Q39 to F59, W87 to I107, L111 to A131, V144 to T164, A183 to V203, A218 to L238, and M246 to L266.

It belongs to the UppP family.

It is found in the cell inner membrane. It catalyses the reaction di-trans,octa-cis-undecaprenyl diphosphate + H2O = di-trans,octa-cis-undecaprenyl phosphate + phosphate + H(+). Its function is as follows. Catalyzes the dephosphorylation of undecaprenyl diphosphate (UPP). Confers resistance to bacitracin. The chain is Undecaprenyl-diphosphatase from Shewanella piezotolerans (strain WP3 / JCM 13877).